We begin with the raw amino-acid sequence, 280 residues long: Acyl-[acyl-carrier-protein]--UDP-N-acetylglucosamine O-acyltransferase (280 aa).

Belongs to the transferase hexapeptide repeat family. LpxA subfamily. In terms of assembly, homotrimer.

It localises to the cytoplasm. The enzyme catalyses a (3R)-hydroxyacyl-[ACP] + UDP-N-acetyl-alpha-D-glucosamine = a UDP-3-O-[(3R)-3-hydroxyacyl]-N-acetyl-alpha-D-glucosamine + holo-[ACP]. It functions in the pathway glycolipid biosynthesis; lipid IV(A) biosynthesis; lipid IV(A) from (3R)-3-hydroxytetradecanoyl-[acyl-carrier-protein] and UDP-N-acetyl-alpha-D-glucosamine: step 1/6. Its function is as follows. Involved in the biosynthesis of lipid A, a phosphorylated glycolipid that anchors the lipopolysaccharide to the outer membrane of the cell. The sequence is that of Acyl-[acyl-carrier-protein]--UDP-N-acetylglucosamine O-acyltransferase from Chlamydia trachomatis serovar A (strain ATCC VR-571B / DSM 19440 / HAR-13).